The primary structure comprises 734 residues: Photosystem I P700 chlorophyll a apoprotein A2 (734 aa).

Helical transmembrane passes span 46-69, 135-158, 175-199, 273-291, 330-353, 369-395, 417-439, and 517-535; these read IFAS…FHVA, LYTG…LHLQ, LNHH…HVAI, MAHH…GHMY, LHFQ…QHMY, AASY…IFFI, AIIS…LYVH, and FLVH…LILV. [4Fe-4S] cluster-binding residues include Cys559 and Cys568. 2 consecutive transmembrane segments (helical) span residues 575–596 and 643–665; these read AFYL…YWHW and LSVW…MFLI. Residues His654, Met662, and Tyr670 each coordinate chlorophyll a. Trp671 contributes to the phylloquinone binding site. A helical membrane pass occupies residues 707-727; it reads LVGLAHFSVGYIFTYAAFLIA.

This sequence belongs to the PsaA/PsaB family. In terms of assembly, the PsaA/B heterodimer binds the P700 chlorophyll special pair and subsequent electron acceptors. PSI consists of a core antenna complex that captures photons, and an electron transfer chain that converts photonic excitation into a charge separation. The eukaryotic PSI reaction center is composed of at least 11 subunits. P700 is a chlorophyll a/chlorophyll a' dimer, A0 is one or more chlorophyll a, A1 is one or both phylloquinones and FX is a shared 4Fe-4S iron-sulfur center. serves as cofactor.

The protein resides in the plastid. It is found in the chloroplast thylakoid membrane. The enzyme catalyses reduced [plastocyanin] + hnu + oxidized [2Fe-2S]-[ferredoxin] = oxidized [plastocyanin] + reduced [2Fe-2S]-[ferredoxin]. PsaA and PsaB bind P700, the primary electron donor of photosystem I (PSI), as well as the electron acceptors A0, A1 and FX. PSI is a plastocyanin-ferredoxin oxidoreductase, converting photonic excitation into a charge separation, which transfers an electron from the donor P700 chlorophyll pair to the spectroscopically characterized acceptors A0, A1, FX, FA and FB in turn. Oxidized P700 is reduced on the lumenal side of the thylakoid membrane by plastocyanin. In Acorus calamus (Sweet flag), this protein is Photosystem I P700 chlorophyll a apoprotein A2.